Reading from the N-terminus, the 138-residue chain is uncharacterized protein (138 aa).

The disordered stretch occupies residues 74 to 96; it reads RRRSPSLPARRPPTPREDALEDY. Basic and acidic residues predominate over residues 87 to 96; the sequence is TPREDALEDY.

This is an uncharacterized protein from Orgyia pseudotsugata (Douglas-fir tussock moth).